The following is a 177-amino-acid chain: Centromere protein R (177 aa).

A Glycyl lysine isopeptide (Lys-Gly) (interchain with G-Cter in SUMO2) cross-link involves residue Lys-8. Residues 9-13 (LDGLL) carry the LXXLL motif motif. At Ser-17 the chain carries Phosphoserine. A DD1 region spans residues 20 to 50 (PSKITRKKSVITYSPTTGTCQMSLFASPTSS). Residue Lys-22 forms a Glycyl lysine isopeptide (Lys-Gly) (interchain with G-Cter in SUMO2) linkage. Ser-28 is modified (phosphoserine). Over residues 41-50 (MSLFASPTSS) the composition is skewed to polar residues. Positions 41–81 (MSLFASPTSSEEQKHRNGLSNEKRKKLNHPSLTESKESTTK) are disordered. The Nuclear localization signal signature appears at 63–66 (KRKK). Residue Ser-71 is modified to Phosphoserine. Residues 83-113 (NDEFMMLLSKVEKLSEEIMEIMQNLSSIQAL) adopt a coiled-coil conformation. The LXXIL motif motif lies at 172 to 176 (LKAIL).

In terms of assembly, homodimer; mediated by the coiled coil domain. Isoform 3, but not other isoforms, interacts with the cytoplasmic tail of integrin ITGB3. The relevance of the interaction with ITGB3 is however uncertain, since isoform 3 is mainly nuclear. Interacts with CCNA2 and MTA1. Interacts with NFKB1 NF-kappa-B subunit. Component of the CENPA-CAD complex, composed of CENPI, CENPK, CENPL, CENPO, CENPP, CENPQ, CENPR and CENPS. The CENPA-CAD complex interacts with the CENPA-NAC complex, at least composed of CENPA, CENPC, CENPH, CENPM, CENPN, CENPT and CENPU. Interacts with TASOR. Widely expressed. Expressed in spleen, thymus, prostate, ovary, small intestine and white blood cells. Highly expressed in testis and colon. Isoform 4 is expressed in platelets, lymphocytes and granulocytes.

Its subcellular location is the nucleus. The protein localises to the chromosome. It localises to the centromere. It is found in the kinetochore. The protein resides in the cytoplasm. In terms of biological role, transcription coregulator that can have both coactivator and corepressor functions. Isoform 1, but not other isoforms, is involved in the coactivation of nuclear receptors for retinoid X (RXRs) and thyroid hormone (TRs) in a ligand-dependent fashion. In contrast, it does not coactivate nuclear receptors for retinoic acid, vitamin D, progesterone receptor, nor glucocorticoid. Acts as a coactivator for estrogen receptor alpha. Acts as a transcriptional corepressor via its interaction with the NFKB1 NF-kappa-B subunit, possibly by interfering with the transactivation domain of NFKB1. Induces apoptosis in breast cancer cells, but not in other cancer cells, via a caspase-2 mediated pathway that involves mitochondrial membrane permeabilization but does not require other caspases. May also act as an inhibitor of cyclin A-associated kinase. Also acts a component of the CENPA-CAD (nucleosome distal) complex, a complex recruited to centromeres which is involved in assembly of kinetochore proteins, mitotic progression and chromosome segregation. May be involved in incorporation of newly synthesized CENPA into centromeres via its interaction with the CENPA-NAC complex. This is Centromere protein R (ITGB3BP) from Homo sapiens (Human).